The chain runs to 515 residues: MFQRKTLQRRNLKGLNLNLHPDVGNNGQLQEKTETHQGQSRIEGHVMSNINAIQNNSNLFLRRGIKKKLTLDAFGDDQAISKPNTVVIQQPQNEPVLVLSSLSQSPCVSSSSSLSTPCIIDAYSNNFGLSPSSTNSTPSTIQGLSNIATPVENEHSISLPPLEESLSPAAADLKDTLSGTSNGNYIQLQDLVQLGKIGAGNSGTVVKALHVPDSKIVAKKTIPVEQNNSTIINQLVRELSIVKNVKPHENIITFYGAYYNQHINNEIIILMEYSDCGSLDKILSVYKRFVQRGTVSSKKTWFNELTISKIAYGVLNGLDHLYRQYKIIHRDIKPSNVLINSKGQIKLCDFGVSKKLINSIADTFVGTSTYMSPERIQGNVYSIKGDVWSLGLMIIELVTGEFPLGGHNDTPDGILDLLQRIVNEPSPRLPKDRIYSKEMTDFVNRCCIKNERERSSIHELLHHDLIMKYVSPSKDDKFRHWCRKIKSKIKEDKRIKREALDRAKLEKKQSERSTH.

The region spanning 191–466 (LVQLGKIGAG…IHELLHHDLI (276 aa)) is the Protein kinase domain. Residues 197–205 (IGAGNSGTV) and lysine 220 each bind ATP. The Proton acceptor role is filled by aspartate 331. At serine 359 the chain carries Phosphoserine. Phosphothreonine is present on threonine 363.

The protein belongs to the protein kinase superfamily. STE Ser/Thr protein kinase family. MAP kinase kinase subfamily.

The catalysed reaction is L-seryl-[protein] + ATP = O-phospho-L-seryl-[protein] + ADP + H(+). The enzyme catalyses L-threonyl-[protein] + ATP = O-phospho-L-threonyl-[protein] + ADP + H(+). It carries out the reaction L-tyrosyl-[protein] + ATP = O-phospho-L-tyrosyl-[protein] + ADP + H(+). With respect to regulation, phosphorylated at multiple sites in response to pheromone. Serine/threonine protein kinase required for cell-type-specific transcription and signal transduction in yeast. It is thought that it is phosphorylated by the ste11 protein kinase and that it can phosphorylate the FUS3 and or KSS1 kinases. This is Serine/threonine-protein kinase STE7 (STE7) from Saccharomyces cerevisiae (strain ATCC 204508 / S288c) (Baker's yeast).